Consider the following 152-residue polypeptide: Deoxyuridine 5'-triphosphate nucleotidohydrolase (152 aa).

Substrate contacts are provided by residues Arg71 to Gly73, Asn84, Leu88 to Asp90, and Met98.

Belongs to the dUTPase family. As to quaternary structure, homotrimer. Requires Mg(2+) as cofactor.

The enzyme catalyses dUTP + H2O = dUMP + diphosphate + H(+). Its pathway is pyrimidine metabolism; dUMP biosynthesis; dUMP from dCTP (dUTP route): step 2/2. In terms of biological role, this enzyme is involved in nucleotide metabolism: it produces dUMP, the immediate precursor of thymidine nucleotides and it decreases the intracellular concentration of dUTP so that uracil cannot be incorporated into DNA. The chain is Deoxyuridine 5'-triphosphate nucleotidohydrolase from Escherichia coli O157:H7.